The chain runs to 528 residues: uncharacterized protein (528 aa).

The disordered stretch occupies residues 1 to 51 (MEHPKRPTPKNEALHIDASGRGESSFSVHRSHSGGHEPFAPSPGSSIGASV). Repeat copies occupy residues 185-213 (EQEEEYISNSLLKKIQQLNQDKDYLVKKY) and 285-313 (EQEQELLINTLGKRMSQMNEEKRKLQQAL). Positions 185-313 (EQEEEYISNS…EEKRKLQQAL (129 aa)) are 2 X 29 AA repeats. Disordered regions lie at residues 467 to 497 (RAHGSSPPTVVVQPSTSRAGSNSTANINNDT) and 509 to 528 (TVHPTQRATPARNERPDSHY). Residues 472-496 (SPPTVVVQPSTSRAGSNSTANINND) show a composition bias toward polar residues.

This is an uncharacterized protein from Caenorhabditis elegans.